The following is a 150-amino-acid chain: S-protein homolog 24 (150 aa).

Asn122 is a glycosylation site (N-linked (GlcNAc...) asparagine).

It belongs to the plant self-incompatibility (S1) protein family.

It is found in the secreted. This chain is S-protein homolog 24, found in Arabidopsis thaliana (Mouse-ear cress).